Here is a 650-residue protein sequence, read N- to C-terminus: Acetyl-coenzyme A synthetase (650 aa).

Residues 191–194 (RAGR), Thr-311, and Asn-335 contribute to the CoA site. Residues 387–389 (GEP), 411–416 (DTWWQT), Asp-500, and Arg-515 each bind ATP. CoA is bound at residue Ser-523. Residue Arg-526 participates in ATP binding. Val-537, His-539, and Val-542 together coordinate Mg(2+). Arg-584 is a binding site for CoA. Residue Lys-609 is modified to N6-acetyllysine.

The protein belongs to the ATP-dependent AMP-binding enzyme family. Mg(2+) is required as a cofactor. In terms of processing, acetylated. Deacetylation by the SIR2-homolog deacetylase activates the enzyme.

It catalyses the reaction acetate + ATP + CoA = acetyl-CoA + AMP + diphosphate. Functionally, catalyzes the conversion of acetate into acetyl-CoA (AcCoA), an essential intermediate at the junction of anabolic and catabolic pathways. AcsA undergoes a two-step reaction. In the first half reaction, AcsA combines acetate with ATP to form acetyl-adenylate (AcAMP) intermediate. In the second half reaction, it can then transfer the acetyl group from AcAMP to the sulfhydryl group of CoA, forming the product AcCoA. This Shewanella halifaxensis (strain HAW-EB4) protein is Acetyl-coenzyme A synthetase.